A 232-amino-acid chain; its full sequence is 6-phosphogluconolactonase (232 aa).

The protein belongs to the glucosamine/galactosamine-6-phosphate isomerase family. 6-phosphogluconolactonase subfamily.

It catalyses the reaction 6-phospho-D-glucono-1,5-lactone + H2O = 6-phospho-D-gluconate + H(+). Its pathway is carbohydrate degradation; pentose phosphate pathway; D-ribulose 5-phosphate from D-glucose 6-phosphate (oxidative stage): step 2/3. Its function is as follows. Hydrolysis of 6-phosphogluconolactone to 6-phosphogluconate. The chain is 6-phosphogluconolactonase (pgl) from Haemophilus influenzae (strain ATCC 51907 / DSM 11121 / KW20 / Rd).